Here is a 473-residue protein sequence, read N- to C-terminus: Fumarate hydratase class II (473 aa).

Substrate-binding positions include 104 to 106 (SGT), 128 to 131 (HPND), 138 to 140 (SSN), and Thr-186. Residue His-187 is the Proton donor/acceptor of the active site. The active site involves Ser-318. Substrate contacts are provided by residues Ser-319 and 324-326 (KVN).

Belongs to the class-II fumarase/aspartase family. Fumarase subfamily. Homotetramer.

Its subcellular location is the cytoplasm. The catalysed reaction is (S)-malate = fumarate + H2O. The protein operates within carbohydrate metabolism; tricarboxylic acid cycle; (S)-malate from fumarate: step 1/1. Functionally, involved in the TCA cycle. Catalyzes the stereospecific interconversion of fumarate to L-malate. In Corynebacterium glutamicum (strain ATCC 13032 / DSM 20300 / JCM 1318 / BCRC 11384 / CCUG 27702 / LMG 3730 / NBRC 12168 / NCIMB 10025 / NRRL B-2784 / 534), this protein is Fumarate hydratase class II.